We begin with the raw amino-acid sequence, 50 residues long: Insulin (50 aa).

Cystine bridges form between Cys-7–Cys-36, Cys-19–Cys-49, and Cys-35–Cys-40.

The protein belongs to the insulin family. In terms of assembly, heterodimer of a B chain and an A chain linked by two disulfide bonds.

Its subcellular location is the secreted. Insulin decreases blood glucose concentration. It increases cell permeability to monosaccharides, amino acids and fatty acids. It accelerates glycolysis, the pentose phosphate cycle, and glycogen synthesis in liver. The sequence is that of Insulin (ins) from Katsuwonus pelamis (Skipjack tuna).